Consider the following 1400-residue polypeptide: DNA-directed RNA polymerase subunit beta' (1400 aa).

Residues cysteine 71, cysteine 73, cysteine 86, and cysteine 89 each coordinate Zn(2+). 3 residues coordinate Mg(2+): aspartate 462, aspartate 464, and aspartate 466. Positions 820, 893, 900, and 903 each coordinate Zn(2+).

It belongs to the RNA polymerase beta' chain family. In terms of assembly, the RNAP catalytic core consists of 2 alpha, 1 beta, 1 beta' and 1 omega subunit. When a sigma factor is associated with the core the holoenzyme is formed, which can initiate transcription. Requires Mg(2+) as cofactor. Zn(2+) is required as a cofactor.

The catalysed reaction is RNA(n) + a ribonucleoside 5'-triphosphate = RNA(n+1) + diphosphate. Its function is as follows. DNA-dependent RNA polymerase catalyzes the transcription of DNA into RNA using the four ribonucleoside triphosphates as substrates. This Methylobacterium sp. (strain 4-46) protein is DNA-directed RNA polymerase subunit beta'.